The primary structure comprises 343 residues: Fanconi anemia group F protein (343 aa).

As to quaternary structure, belongs to the multisubunit FA complex composed of FANCA, FANCB, FANCC, FANCE, FANCF, FANCG, FANCL/PHF9 and FANCM. In complex with FANCA, FANCG and FANCL, but not with FANCC, nor FANCE, interacts with HES1; this interaction may be essential for the stability and nuclear localization of FA core complex proteins.

The protein resides in the nucleus. DNA repair protein that may operate in a postreplication repair or a cell cycle checkpoint function. May be implicated in interstrand DNA cross-link repair and in the maintenance of normal chromosome stability. In Mus musculus (Mouse), this protein is Fanconi anemia group F protein.